Here is a 214-residue protein sequence, read N- to C-terminus: MAAEVPTFKLVLVGDGGTGKTTFVKRHLTGEFEKKYIATIGVEVHPLAFYTNFGEIKFDVWDTAGQEKFGGLRDGYYINAQCGIIMFDVTSRITYKNVPNWHRDLVRVCENIPIVLCGNKVDVKERKVKAKTITFHRKKNLQYYDISAKSNYNFEKPFLWLARKLAGNPQLDFVASPALAPPEVQVDEQLMQQYQQEMERATALPLPDEDDADL.

Residues 4 to 168 form the Small GTPase Ran-type domain; the sequence is EVPTFKLVLV…LWLARKLAGN (165 aa). 15–22 contributes to the GTP binding site; it reads DGGTGKTT. The tract at residues 34 to 42 is switch-I; the sequence is KKYIATIGV. GTP-binding positions include Gly-65, 119-122, and 147-149; these read NKVD and SAK. Positions 65 to 81 are switch-II; that stretch reads GQEKFGGLRDGYYINAQ.

This sequence belongs to the small GTPase superfamily. Ran family. As to quaternary structure, found in a nuclear export complex with RanGTP, exportin and pre-miRNA.

The protein localises to the nucleus. Its function is as follows. GTP-binding protein involved in nucleocytoplasmic transport. Required for the import of protein into the nucleus and also for RNA export. Involved in chromatin condensation and control of cell cycle. The chain is GTP-binding nuclear protein GSP1/Ran (GSP1) from Eremothecium gossypii (strain ATCC 10895 / CBS 109.51 / FGSC 9923 / NRRL Y-1056) (Yeast).